Consider the following 503-residue polypeptide: Aromatase 1 (503 aa).

Position 437 (Cys437) interacts with heme.

This sequence belongs to the cytochrome P450 family. It depends on heme as a cofactor.

The protein localises to the membrane. The enzyme catalyses testosterone + 3 reduced [NADPH--hemoprotein reductase] + 3 O2 = 17beta-estradiol + formate + 3 oxidized [NADPH--hemoprotein reductase] + 4 H2O + 4 H(+). It carries out the reaction androst-4-ene-3,17-dione + 3 reduced [NADPH--hemoprotein reductase] + 3 O2 = estrone + formate + 3 oxidized [NADPH--hemoprotein reductase] + 4 H2O + 4 H(+). In terms of biological role, catalyzes the formation of aromatic C18 estrogens from C19 androgens. This is Aromatase 1 (CYP19A1) from Sus scrofa (Pig).